Here is a 383-residue protein sequence, read N- to C-terminus: Delta(12)-fatty-acid desaturase (383 aa).

The disordered stretch occupies residues 1–24 (MGAGGRMPVPTSSKKSETDTTKRV). A compositionally biased stretch (basic and acidic residues) spans 14-24 (KKSETDTTKRV). A helical membrane pass occupies residues 56–76 (LISDIIIASCFYYVATNYFSL). A Histidine box-1 motif is present at residues 105-109 (HECGH). A helical membrane pass occupies residues 117–137 (WLDDTVGLIFHSFLLVPYFSW). The Histidine box-2 motif lies at 141–145 (HRRHH). A run of 3 helical transmembrane segments spans residues 179 to 199 (IMML…FNVS), 225 to 245 (IYLS…YAAA), and 252 to 272 (ICLY…ITYL). The Histidine box-3 motif lies at 315-319 (HVAHH).

The protein belongs to the fatty acid desaturase type 1 family. In terms of assembly, homo- and heterodimer. Interacts with FAD3 but not with FAD6. FAD2-FAD3 heterodimers can form a metabolic channel in which 18:1-PC is converted to 18:3-PC without releasing a free 18:2-PC intermediate. Expressed in shoots and roots. Expressed in leaves, stems, flowers and siliques.

The protein resides in the endoplasmic reticulum membrane. Its subcellular location is the microsome membrane. It catalyses the reaction (9Z)-octadecenoyl-CoA + 2 Fe(II)-[cytochrome b5] + O2 + 2 H(+) = (9Z,12Z)-octadecadienoyl-CoA + 2 Fe(III)-[cytochrome b5] + 2 H2O. It carries out the reaction (9Z)-hexadecenoyl-CoA + 2 Fe(II)-[cytochrome b5] + O2 + 2 H(+) = (9Z,12Z)-hexadecadienoyl-CoA + 2 Fe(III)-[cytochrome b5] + 2 H2O. The catalysed reaction is a (9Z)-octadecenoyl-containing glycerolipid + 2 Fe(II)-[cytochrome b5] + O2 + 2 H(+) = a (9Z,12Z)-octadecadienoyl-containing glycerolipid + 2 Fe(III)-[cytochrome b5] + 2 H2O. The enzyme catalyses (9Z)-octadecenoyl-CoA + AH2 + O2 = (9Z,12Z)-octadecadienoyl-CoA + A + 2 H2O. It catalyses the reaction (9Z)-hexadecenoyl-CoA + AH2 + O2 = (9Z,12Z)-hexadecadienoyl-CoA + A + 2 H2O. It carries out the reaction (9Z)-tetradecenoyl-CoA + 2 Fe(II)-[cytochrome b5] + O2 + 2 H(+) = (9Z,12Z)-tetradecadienoyl-CoA + 2 Fe(III)-[cytochrome b5] + 2 H2O. The catalysed reaction is (9Z)-pentadecenoyl-CoA + 2 Fe(II)-[cytochrome b5] + O2 + 2 H(+) = (9Z,12Z)-pentadecadienoyl-CoA + 2 Fe(III)-[cytochrome b5] + 2 H2O. The enzyme catalyses (9Z)-heptadecenoyl-CoA + 2 Fe(II)-[cytochrome b5] + O2 + 2 H(+) = (9Z,12Z)-heptadecadienoyl-CoA + 2 Fe(III)-[cytochrome b5] + 2 H2O. It functions in the pathway lipid metabolism; polyunsaturated fatty acid biosynthesis. Functionally, ER (microsomal) omega-6 fatty acid desaturase introduces the second double bond in the biosynthesis of 18:3 fatty acids, important constituents of plant membranes. Delta(12)-desaturase with regioselectivity determined by the double bond (delta(9) position) and carboxyl group of the substrate. Can use both 16:1 and 18:1 fatty acids as substrates. It is thought to use cytochrome b5 as an electron donor and to act on fatty acids esterified to phosphatidylcholine (PC) and, possibly, other phospholipids. Very low constitutive hydroxylation activity. Required for desaturation of fatty acids present in extraplastidial membranes, including mitochondria. Required for salt tolerance during seed germination and early seedling growth. The polypeptide is Delta(12)-fatty-acid desaturase (Arabidopsis thaliana (Mouse-ear cress)).